The sequence spans 767 residues: V-set and immunoglobulin domain-containing protein 10-like 2 (767 aa).

An N-terminal signal peptide occupies residues 1 to 28 (MVGQRAQHSPVSLLLLIHLCLLHLRASG). 3 Ig-like domains span residues 34-140 (PEAP…SHLT), 150-234 (PQVR…AFLD), and 242-324 (PVIT…TTVQ). 3 cysteine pairs are disulfide-bonded: Cys56/Cys122, Cys169/Cys217, and Cys268/Cys308. Asn376 carries N-linked (GlcNAc...) asparagine glycosylation. 2 Ig-like domains span residues 399 to 499 (PALA…LQLE) and 501 to 593 (PQLD…VLLE). 2 disulfides stabilise this stretch: Cys435–Cys481 and Cys522–Cys577. Positions 599–699 (APPNVTISRL…EVKIPADPPF (101 aa)) constitute a Fibronectin type-III domain. 2 N-linked (GlcNAc...) asparagine glycosylation sites follow: Asn602 and Asn628. Residues 704 to 724 (AVLGAAGTGMVVATVASLLVF) form a helical membrane-spanning segment. A disordered region spans residues 735–754 (PRLETPTTTPGLDPAQETTD). The span at 739 to 754 (TPTTTPGLDPAQETTD) shows a compositional bias: polar residues.

The protein resides in the membrane. The polypeptide is V-set and immunoglobulin domain-containing protein 10-like 2 (Homo sapiens (Human)).